Consider the following 142-residue polypeptide: Large ribosomal subunit protein uL13 (142 aa).

Belongs to the universal ribosomal protein uL13 family. Part of the 50S ribosomal subunit.

Functionally, this protein is one of the early assembly proteins of the 50S ribosomal subunit, although it is not seen to bind rRNA by itself. It is important during the early stages of 50S assembly. The protein is Large ribosomal subunit protein uL13 of Syntrophus aciditrophicus (strain SB).